Here is a 171-residue protein sequence, read N- to C-terminus: Large ribosomal subunit protein uL10 (171 aa).

Belongs to the universal ribosomal protein uL10 family. As to quaternary structure, part of the ribosomal stalk of the 50S ribosomal subunit. The N-terminus interacts with L11 and the large rRNA to form the base of the stalk. The C-terminus forms an elongated spine to which L12 dimers bind in a sequential fashion forming a multimeric L10(L12)X complex.

Forms part of the ribosomal stalk, playing a central role in the interaction of the ribosome with GTP-bound translation factors. The protein is Large ribosomal subunit protein uL10 of Phenylobacterium zucineum (strain HLK1).